A 205-amino-acid polypeptide reads, in one-letter code: DNA-directed RNA polymerases IV and V subunit 4 (205 aa).

The interval 1-79 (MSEKGGKGLK…TKSSKNSLHS (79 aa)) is disordered. Residues 48–60 (NVSSDQQPFQSSA) are compositionally biased toward polar residues.

It belongs to the eukaryotic RPB4 RNA polymerase subunit family. As to quaternary structure, component of the RNA polymerase IV and V complexes. Interacts with NRPD1 and NRPE1. Expressed in shoot meristematic region and in root tips. Detected in cotyledons, flowers and young leaves.

The protein resides in the nucleus. Its function is as follows. DNA-dependent RNA polymerase catalyzes the transcription of DNA into RNA using the four ribonucleoside triphosphates as substrates. Component of RNA polymerases IV and V which mediate short-interfering RNAs (siRNA) accumulation and subsequent RNA-directed DNA methylation-dependent (RdDM) transcriptional gene silencing (TGS) of endogenous repeated sequences, including transposable elements. Required for the de novo DNA methylation directed by the RdDM pathway. This chain is DNA-directed RNA polymerases IV and V subunit 4 (NRPD4), found in Arabidopsis thaliana (Mouse-ear cress).